Here is a 184-residue protein sequence, read N- to C-terminus: Peptidyl-tRNA hydrolase (184 aa).

Tyr13 lines the tRNA pocket. Catalysis depends on His18, which acts as the Proton acceptor. Positions 59, 61, and 105 each coordinate tRNA.

The protein belongs to the PTH family. In terms of assembly, monomer.

It is found in the cytoplasm. It carries out the reaction an N-acyl-L-alpha-aminoacyl-tRNA + H2O = an N-acyl-L-amino acid + a tRNA + H(+). In terms of biological role, hydrolyzes ribosome-free peptidyl-tRNAs (with 1 or more amino acids incorporated), which drop off the ribosome during protein synthesis, or as a result of ribosome stalling. Functionally, catalyzes the release of premature peptidyl moieties from peptidyl-tRNA molecules trapped in stalled 50S ribosomal subunits, and thus maintains levels of free tRNAs and 50S ribosomes. The sequence is that of Peptidyl-tRNA hydrolase from Sulfurimonas denitrificans (strain ATCC 33889 / DSM 1251) (Thiomicrospira denitrificans (strain ATCC 33889 / DSM 1251)).